The sequence spans 270 residues: MVKPMHLFAVVDALEQAQQFQQVLASRDVSTELVQIEQLNARFLRHHPELALCVDLDGLWLSANGMKMQPDWQAEIPRLKRASLKSEMIARACQINEQPSLIDATAGLGHDSLLMAYLGAHVTLVERHPVLFTLLEDAKSKAENDPFLSKYMQRIHLIFQDAHYYLQQCNQDDRKVDVIYLDPMFPQRDQHHQVIKKQAQVKKQMQLLHLLLPEDGEMDLGDQLLPLAQQIASRVVVKRPKHAVFLNEQQPDHQWQGDACRFDAYFQISM.

S-adenosyl-L-methionine-binding positions include 126-127 (ER) and aspartate 182.

Belongs to the methyltransferase superfamily. RsmJ family.

The protein resides in the cytoplasm. It carries out the reaction guanosine(1516) in 16S rRNA + S-adenosyl-L-methionine = N(2)-methylguanosine(1516) in 16S rRNA + S-adenosyl-L-homocysteine + H(+). Functionally, specifically methylates the guanosine in position 1516 of 16S rRNA. The protein is Ribosomal RNA small subunit methyltransferase J of Acinetobacter baylyi (strain ATCC 33305 / BD413 / ADP1).